Reading from the N-terminus, the 477-residue chain is Ubiquitin carboxyl-terminal hydrolase 7 (477 aa).

The 76-residue stretch at leucine 2–isoleucine 77 folds into the Ubiquitin-like domain. In terms of domain architecture, USP spans alanine 104–arginine 473. Cysteine 113 serves as the catalytic Nucleophile. Residues methionine 171–glycine 190 form a calmodulin-binding region. The segment at glutamine 364–serine 401 is disordered. The segment covering serine 371–aspartate 380 has biased composition (basic and acidic residues). A compositionally biased stretch (polar residues) spans glutamate 382–glycine 399. Histidine 425 acts as the Proton acceptor in catalysis.

It belongs to the peptidase C19 family. Interacts with calmodulin (CaM).

The catalysed reaction is Thiol-dependent hydrolysis of ester, thioester, amide, peptide and isopeptide bonds formed by the C-terminal Gly of ubiquitin (a 76-residue protein attached to proteins as an intracellular targeting signal).. Recognizes and hydrolyzes the peptide bond at the C-terminal Gly of ubiquitin. Involved in the processing of poly-ubiquitin precursors as well as that of ubiquitinated proteins. This chain is Ubiquitin carboxyl-terminal hydrolase 7 (UBP7), found in Arabidopsis thaliana (Mouse-ear cress).